The following is a 318-amino-acid chain: Gamma-glutamyl hydrolase (318 aa).

The first 24 residues, 1-24 (MASPGCLLCVLGLLLCGAASLELS), serve as a signal peptide directing secretion. Positions 25–318 (RPHGDTAKKP…SSFQQCYIFD (294 aa)) constitute a Gamma-glutamyl hydrolase domain. N-linked (GlcNAc...) asparagine glycosylation occurs at asparagine 116. Residue cysteine 134 is the Nucleophile of the active site. 2 N-linked (GlcNAc...) asparagine glycosylation sites follow: asparagine 163 and asparagine 203. Residue histidine 244 is the Proton donor of the active site. Asparagine 307 is a glycosylation site (N-linked (GlcNAc...) asparagine; partial).

It belongs to the peptidase C26 family. In terms of assembly, homodimer.

The protein localises to the secreted. The protein resides in the extracellular space. It localises to the lysosome. Its subcellular location is the melanosome. The enzyme catalyses (6S)-5,6,7,8-tetrahydrofolyl-(gamma-L-Glu)(n) + (n-1) H2O = (6S)-5,6,7,8-tetrahydrofolate + (n-1) L-glutamate. Its function is as follows. Hydrolyzes the polyglutamate sidechains of pteroylpolyglutamates. Progressively removes gamma-glutamyl residues from pteroylpoly-gamma-glutamate to yield pteroyl-alpha-glutamate (folic acid) and free glutamate. May play an important role in the bioavailability of dietary pteroylpolyglutamates and in the metabolism of pteroylpolyglutamates and antifolates. This is Gamma-glutamyl hydrolase from Homo sapiens (Human).